Reading from the N-terminus, the 239-residue chain is Cysteine-rich venom protein (239 aa).

Residues methionine 1 to alanine 18 form the signal peptide. Residues valine 37 to tyrosine 165 enclose the SCP domain. 7 cysteine pairs are disulfide-bonded: cysteine 74–cysteine 152, cysteine 91–cysteine 166, cysteine 147–cysteine 163, cysteine 185–cysteine 192, cysteine 188–cysteine 197, cysteine 210–cysteine 228, and cysteine 219–cysteine 232. A ShKT domain is found at cysteine 201–cysteine 234.

It belongs to the CRISP family. Expressed by the venom gland.

Its subcellular location is the secreted. In terms of biological role, blocks contraction of smooth muscle elicited by high potassium-induced depolarization, but does not block caffeine-stimulated contraction. May target voltage-gated calcium channels on smooth muscle. This chain is Cysteine-rich venom protein, found in Cerberus rynchops (Dog-faced water snake).